Reading from the N-terminus, the 901-residue chain is Alanine--tRNA ligase (901 aa).

Residues histidine 581, histidine 585, cysteine 684, and histidine 688 each coordinate Zn(2+).

It belongs to the class-II aminoacyl-tRNA synthetase family. It depends on Zn(2+) as a cofactor.

It is found in the cytoplasm. It catalyses the reaction tRNA(Ala) + L-alanine + ATP = L-alanyl-tRNA(Ala) + AMP + diphosphate. Its function is as follows. Catalyzes the attachment of alanine to tRNA(Ala) in a two-step reaction: alanine is first activated by ATP to form Ala-AMP and then transferred to the acceptor end of tRNA(Ala). Also edits incorrectly charged Ser-tRNA(Ala) and Gly-tRNA(Ala) via its editing domain. This chain is Alanine--tRNA ligase, found in Mycobacterium marinum (strain ATCC BAA-535 / M).